A 186-amino-acid polypeptide reads, in one-letter code: CoB--CoM heterodisulfide reductase iron-sulfur subunit C 2 (186 aa).

4Fe-4S ferredoxin-type domains lie at Gly-26 to Thr-56 and Leu-67 to Ile-99. Positions 36, 39, 42, 46, 79, 82, 85, and 89 each coordinate [4Fe-4S] cluster.

The protein belongs to the HdrC family. In terms of assembly, the heterodisulfide reductase is composed of three subunits; HdrA, HdrB and HdrC. It depends on [4Fe-4S] cluster as a cofactor.

It functions in the pathway cofactor metabolism; coenzyme M-coenzyme B heterodisulfide reduction; coenzyme B and coenzyme M from coenzyme M-coenzyme B heterodisulfide: step 1/1. In terms of biological role, part of a complex that catalyzes the reversible reduction of CoM-S-S-CoB to the thiol-coenzymes H-S-CoM (coenzyme M) and H-S-CoB (coenzyme B). This Methanocaldococcus jannaschii (strain ATCC 43067 / DSM 2661 / JAL-1 / JCM 10045 / NBRC 100440) (Methanococcus jannaschii) protein is CoB--CoM heterodisulfide reductase iron-sulfur subunit C 2 (hdrC2).